The sequence spans 632 residues: DNA ligase (632 aa).

NAD(+)-binding positions include 45 to 49 and 89 to 90; these read NEDYD and SI. Residue Lys127 is the N6-AMP-lysine intermediate of the active site. NAD(+) is bound by residues Arg143, Glu174, and Lys286. Positions 374, 377, 390, and 396 each coordinate Zn(2+). A BRCT domain is found at 561–632; it reads DKRIVFTGKM…EADYLSKITM (72 aa).

The protein belongs to the NAD-dependent DNA ligase family. LigA subfamily. The cofactor is Mg(2+). It depends on Mn(2+) as a cofactor.

The enzyme catalyses NAD(+) + (deoxyribonucleotide)n-3'-hydroxyl + 5'-phospho-(deoxyribonucleotide)m = (deoxyribonucleotide)n+m + AMP + beta-nicotinamide D-nucleotide.. DNA ligase that catalyzes the formation of phosphodiester linkages between 5'-phosphoryl and 3'-hydroxyl groups in double-stranded DNA using NAD as a coenzyme and as the energy source for the reaction. It is essential for DNA replication and repair of damaged DNA. This is DNA ligase from Vesicomyosocius okutanii subsp. Calyptogena okutanii (strain HA).